A 72-amino-acid polypeptide reads, in one-letter code: Tetrahydromethanopterin S-methyltransferase subunit G (72 aa).

The chain crosses the membrane as a helical span at residues 48–68 (IGILYGGFIGLLLFLIYTVVS).

It belongs to the MtrG family. In terms of assembly, the complex is composed of 8 subunits; MtrA, MtrB, MtrC, MtrD, MtrE, MtrF, MtrG and MtrH.

Its subcellular location is the cell membrane. The enzyme catalyses 5-methyl-5,6,7,8-tetrahydromethanopterin + coenzyme M + 2 Na(+)(in) = 5,6,7,8-tetrahydromethanopterin + methyl-coenzyme M + 2 Na(+)(out). It functions in the pathway one-carbon metabolism; methanogenesis from CO(2); methyl-coenzyme M from 5,10-methylene-5,6,7,8-tetrahydromethanopterin: step 2/2. Its function is as follows. Part of a complex that catalyzes the formation of methyl-coenzyme M and tetrahydromethanopterin from coenzyme M and methyl-tetrahydromethanopterin. This is an energy-conserving, sodium-ion translocating step. This is Tetrahydromethanopterin S-methyltransferase subunit G from Methanosarcina barkeri (strain Fusaro / DSM 804).